The sequence spans 118 residues: Large ribosomal subunit protein bL20 (118 aa).

This sequence belongs to the bacterial ribosomal protein bL20 family.

Its function is as follows. Binds directly to 23S ribosomal RNA and is necessary for the in vitro assembly process of the 50S ribosomal subunit. It is not involved in the protein synthesizing functions of that subunit. The chain is Large ribosomal subunit protein bL20 from Caulobacter vibrioides (strain ATCC 19089 / CIP 103742 / CB 15) (Caulobacter crescentus).